A 984-amino-acid chain; its full sequence is Translation initiation factor IF-2 (984 aa).

Residues 32-402 (PAKNATSTLT…TQPQRAAKRK (371 aa)) form a disordered region. Residues 89-123 (PAETEAQASPAQPEAKAAAPAAEAEEAPAAKPAPA) show a composition bias toward low complexity. Positions 126–136 (RKAEARTEAPR) are enriched in basic and acidic residues. Low complexity-rich tracts occupy residues 154-172 (APETAAPAQPAPEAQSAAP) and 187-197 (AETTESAPAEP). Residues 198 to 220 (AAEKAPAEKRRYEVSMEPEKDSV) are compositionally biased toward basic and acidic residues. Positions 255 to 270 (RPDPAAVQAQAAAAAQ) are enriched in low complexity. The span at 271-283 (AREERAERPDRGP) shows a compositional bias: basic and acidic residues. Residues 308–334 (GRPAPRSGAPRPGGARPAAGFGQPAQA) are compositionally biased toward low complexity. The tr-type G domain occupies 482 to 651 (PRPPVVTIMG…ALQAEVLELK (170 aa)). The interval 491–498 (GHVDHGKT) is G1. Residue 491-498 (GHVDHGKT) coordinates GTP. Residues 516–520 (GITQH) form a G2 region. The segment at 537 to 540 (DTPG) is G3. GTP-binding positions include 537–541 (DTPGH) and 591–594 (NKID). Residues 591–594 (NKID) form a G4 region. The segment at 627 to 629 (SAK) is G5.

Belongs to the TRAFAC class translation factor GTPase superfamily. Classic translation factor GTPase family. IF-2 subfamily.

It localises to the cytoplasm. Its function is as follows. One of the essential components for the initiation of protein synthesis. Protects formylmethionyl-tRNA from spontaneous hydrolysis and promotes its binding to the 30S ribosomal subunits. Also involved in the hydrolysis of GTP during the formation of the 70S ribosomal complex. The protein is Translation initiation factor IF-2 of Oleidesulfovibrio alaskensis (strain ATCC BAA-1058 / DSM 17464 / G20) (Desulfovibrio alaskensis).